The sequence spans 625 residues: MISSVCVSSYRGRKSGNKPPSKTCLKEEMAKGEASEKIIINVGGTRHETYRSTLRTLPGTRLAWLADPDGGGRPESDGGGAGSSGSSGGGGGCEFFFDRHPGVFAYVLNYYRTGKLHCPADVCGPLFEEELTFWGIDETDVEPCCWMTYRQHRDAEEALDIFESPDGGGGGAGPGDEAGDDERELALQRLGPHEGGSGPGAGSGGCRGWQPRMWALFEDPYSSRAARVVAFASLFFILVSITTFCLETHEAFNIDRNVTEIHRVGNITSVRFRREVETEPILTYIEGVCVMWFTLEFLVRIVCCPDTLDFVKNLLNIIDFVAILPFYLEVGLSGLSSKAARDVLGFLRVVRFVRILRIFKLTRHFVGLRVLGHTLRASTNEFLLLIIFLALGVLIFATMIYYAERIGARPSDPRGNDHTDFKNIPIGFWWAVVTMTTLGYGDMYPKTWSGMLVGALCALAGVLTIAMPVPVIVNNFGMYYSLAMAKQKLPKKRKKHVPRPPQLESPIYCKSEETSPRDSTYSDTSPPAREEGMVERKRADSKQNGDANAVLSDEEGAGLTQPLASAPTPEERRALRRSGTRDRNKKAAACFLLSAGDYACADGSVQKEGSVEPKACVPVSHTCAL.

Disordered regions lie at residues 1-24 and 65-86; these read MISS…SKTC and LADP…SSGS. The segment at 1 to 28 is inactivation gate; the sequence is MISSVCVSSYRGRKSGNKPPSKTCLKEE. The Cytoplasmic segment spans residues 1–227; that stretch reads MISSVCVSSY…EDPYSSRAAR (227 aa). 4 positions are modified to phosphoserine: Ser-8, Ser-9, Ser-15, and Ser-21. Residues 77–86 show a composition bias toward gly residues; it reads DGGGAGSSGS. Zn(2+)-binding residues include His-117, Cys-123, Cys-144, and Cys-145. Residues 228–248 form a helical membrane-spanning segment; that stretch reads VVAFASLFFILVSITTFCLET. N-linked (GlcNAc...) asparagine glycosylation is found at Asn-257 and Asn-266. Residues 279-299 traverse the membrane as a helical segment; it reads EPILTYIEGVCVMWFTLEFLV. Over 300 to 313 the chain is Cytoplasmic; sequence RIVCCPDTLDFVKN. A helical membrane pass occupies residues 314 to 334; it reads LLNIIDFVAILPFYLEVGLSG. A helical; Voltage-sensor membrane pass occupies residues 346–365; sequence FLRVVRFVRILRIFKLTRHF. Residues 366-381 lie on the Cytoplasmic side of the membrane; sequence VGLRVLGHTLRASTNE. Residues 382-402 form a helical membrane-spanning segment; that stretch reads FLLLIIFLALGVLIFATMIYY. Thr-437, Leu-438, Gly-439, and Tyr-440 together coordinate K(+). The Selectivity filter signature appears at 437 to 442; sequence TLGYGD. Residues 453 to 473 traverse the membrane as a helical segment; sequence VGALCALAGVLTIAMPVPVIV. The Cytoplasmic segment spans residues 474-625; it reads NNFGMYYSLA…CVPVSHTCAL (152 aa). The segment at 490-581 is disordered; it reads PKKRKKHVPR…RRALRRSGTR (92 aa). The segment covering 528–543 has biased composition (basic and acidic residues); that stretch reads AREEGMVERKRADSKQ.

It belongs to the potassium channel family. C (Shaw) (TC 1.A.1.2) subfamily. Kv3.4/KCNC4 sub-subfamily. As to quaternary structure, homotetramer. Heterotetramer of potassium channel proteins. Phosphorylation of serine residues in the inactivation gate inhibits rapid channel closure.

It is found in the membrane. It catalyses the reaction K(+)(in) = K(+)(out). Functionally, voltage-gated potassium channel that opens in response to the voltage difference across the membrane, forming a potassium-selective channel through which potassium ions pass in accordance with their electrochemical gradient. The channel displays rapid activation and inactivation kinetics. This is Voltage-gated potassium channel KCNC4 from Rattus norvegicus (Rat).